Reading from the N-terminus, the 239-residue chain is MAKPKKSDEEVSIDSDSLKIKVAKEAAKLIKDEMVVGLGSGSTANLFIQELGKRVIEEELYIYGVPTSFDSRMMANQSGIPLISLDQCGEIDIAIDGADEIDKKTFSLIKGGGGCHTMEKIVDYYAKEFVVLADESKMVDSLGENTPVPLEVIPFSYSTVLSKLLKINAAPAIRSGSGKMGPVITDNGNMIIDVFINIEDAEETETMLNSIPGVLENGIFTKCDKVLIGTSKKVEVLKK.

Residues 40–43 (SGST), 96–99 (DGAD), and 110–113 (KGGG) each bind substrate. Catalysis depends on Glu-119, which acts as the Proton acceptor. Lys-137 lines the substrate pocket.

Belongs to the ribose 5-phosphate isomerase family. As to quaternary structure, homodimer.

It carries out the reaction aldehydo-D-ribose 5-phosphate = D-ribulose 5-phosphate. It functions in the pathway carbohydrate degradation; pentose phosphate pathway; D-ribose 5-phosphate from D-ribulose 5-phosphate (non-oxidative stage): step 1/1. Its function is as follows. Catalyzes the reversible conversion of ribose-5-phosphate to ribulose 5-phosphate. In Methanococcus vannielii (strain ATCC 35089 / DSM 1224 / JCM 13029 / OCM 148 / SB), this protein is Ribose-5-phosphate isomerase A.